A 2910-amino-acid polypeptide reads, in one-letter code: Highly reducing polyketide synthase calA (2910 aa).

Residues 8–444 (NEPLAIVGSA…GTNAHAILES (437 aa)) enclose the Ketosynthase family 3 (KS3) domain. Residues Cys181, His320, and His364 each act as for beta-ketoacyl synthase activity in the active site. Positions 559-875 (VFTGQGAQYA…PYYGVLSRGT (317 aa)) are acyl transferase (AT) domain. The segment at 948–1082 (NQLLGTMMPD…LHIVFGPSSE (135 aa)) is N-terminal hotdog fold. The PKS/mFAS DH domain maps to 948–1245 (NQLLGTMMPD…LKPLGALTAK (298 aa)). The tract at residues 949 to 1242 (QLLGTMMPDS…GVELKPLGAL (294 aa)) is dehydratase (DH) domain. Residue His980 is the Proton acceptor; for dehydratase activity of the active site. The interval 1095-1245 (MISVDNERFY…LKPLGALTAK (151 aa)) is C-terminal hotdog fold. Asp1156 functions as the Proton donor; for dehydratase activity in the catalytic mechanism. The segment at 1399-1586 (EAGLWIGKII…GIDSTAPQAF (188 aa)) is methyltransferase (MT) domain. The interval 2125 to 2298 (TYWLCGLSGA…AATALNVGAI (174 aa)) is ketoreductase (KR)domain. In terms of domain architecture, Carrier spans 2406–2488 (QSRSEVLAVV…ELAELAAEQA (83 aa)). Position 2448 is an O-(pantetheine 4'-phosphoryl)serine (Ser2448). A disordered region spans residues 2492–2565 (LLPGLGGEAP…TPDPHSTKGP (74 aa)). Residues 2522–2534 (VPQSDETGSSSAD) show a composition bias toward polar residues. Positions 2550-2559 (GYTTPTTPDP) are enriched in low complexity. The segment at 2597–2826 (LTGVSGLLGR…DFVYVKNAAD (230 aa)) is reductase (R) domain.

It participates in secondary metabolite biosynthesis. In terms of biological role, highly reducing polyketide synthase; part of the gene cluster that mediates the biosynthesis of calbistrin A and related compounds. Calbistrin A is a secondary metabolite with an interesting structure that was recently found to have bioactivity against leukemia cells. It consists of two polyketides linked by an ester bond: a bicyclic decalin containing polyketide and a linear 12 carbon dioic acid structure. The polyketide synthase calA is probably responsible for forming the decalin moiety. Because calA lacks a designated enoylreductase (ER) domain, the required activity is provided by the trans-enoyl reductase calK. Following release from the PKS, calF then probably catalyzes the oxidation and the subsequent Diels Alder cycloisomerization that lead to the formation of the decalin moiety. The decalin polyketide backbone includes two C-methyl groups, at C7 and C11 in backbone, of which the C7 position is probably methylated by the methyltransferase domain of calA. A candidate for adding the methyl group at C11, if not done by CalA, is the cluster methyltransferase calH. Several additional tailoring enzymes within the cluster could be involved in the modification of the decalin polyketide product. Those include the 3 cytochrome P450 monooxygenases CalE, CalG and CalL, of which one might be responsible for the introduction of the extra hydroxyl group attached to the backbone of the decalin moiety, at position C9 in the backbone, that allows for attachment of the linear moiety. One tailoring enzyme activity that is expected to be involved in biosynthesis of calbistrin is an acyltransferase for connecting the two polyketide synthase products, and which could be performed by the cluster acyltransferase calJ. The enzyme responsible for the biosynthesis of the linear moiety, probably a second PKS, has not been identified yet. This chain is Highly reducing polyketide synthase calA, found in Penicillium decumbens.